We begin with the raw amino-acid sequence, 105 residues long: Small ribosomal subunit protein eS25 (105 aa).

It belongs to the eukaryotic ribosomal protein eS25 family. As to quaternary structure, component of the small ribosomal subunit. Mature ribosomes consist of a small (40S) and a large (60S) subunit. The 40S subunit contains about 32 different proteins and 1 molecule of RNA (18S). The 60S subunit contains 45 different proteins and 3 molecules of RNA (25S, 5.8S and 5S).

The protein resides in the cytoplasm. Its function is as follows. Component of the ribosome, a large ribonucleoprotein complex responsible for the synthesis of proteins in the cell. The small ribosomal subunit (SSU) binds messenger RNAs (mRNAs) and translates the encoded message by selecting cognate aminoacyl-transfer RNA (tRNA) molecules. The large subunit (LSU) contains the ribosomal catalytic site termed the peptidyl transferase center (PTC), which catalyzes the formation of peptide bonds, thereby polymerizing the amino acids delivered by tRNAs into a polypeptide chain. The nascent polypeptides leave the ribosome through a tunnel in the LSU and interact with protein factors that function in enzymatic processing, targeting, and the membrane insertion of nascent chains at the exit of the ribosomal tunnel. The protein is Small ribosomal subunit protein eS25 (RPS25B) of Candida albicans (strain SC5314 / ATCC MYA-2876) (Yeast).